The primary structure comprises 366 residues: tRNA-specific 2-thiouridylase MnmA (366 aa).

Residues 6–13 (GLSGGVDS) and methionine 32 each bind ATP. The Nucleophile role is filled by cysteine 96. A disulfide bond links cysteine 96 and cysteine 196. Residue glycine 120 participates in ATP binding. An interaction with tRNA region spans residues 146-148 (KDQ). Catalysis depends on cysteine 196, which acts as the Cysteine persulfide intermediate. An interaction with tRNA region spans residues 302 to 303 (RY).

The protein belongs to the MnmA/TRMU family.

The protein localises to the cytoplasm. The catalysed reaction is S-sulfanyl-L-cysteinyl-[protein] + uridine(34) in tRNA + AH2 + ATP = 2-thiouridine(34) in tRNA + L-cysteinyl-[protein] + A + AMP + diphosphate + H(+). Functionally, catalyzes the 2-thiolation of uridine at the wobble position (U34) of tRNA, leading to the formation of s(2)U34. The sequence is that of tRNA-specific 2-thiouridylase MnmA from Treponema denticola (strain ATCC 35405 / DSM 14222 / CIP 103919 / JCM 8153 / KCTC 15104).